The sequence spans 401 residues: Cartilage-associated protein (401 aa).

A signal peptide spans 1–26 (MEPGRRGAAALLALLCVACALRAGRA). 2 N-linked (GlcNAc...) asparagine glycosylation sites follow: N87 and N363.

Belongs to the leprecan family. As to expression, found in articular chondrocytes. Expressed in a variety of tissues.

It localises to the secreted. Its subcellular location is the extracellular space. It is found in the extracellular matrix. Its function is as follows. Necessary for efficient 3-hydroxylation of fibrillar collagen prolyl residues. The sequence is that of Cartilage-associated protein (CRTAP) from Homo sapiens (Human).